Here is a 231-residue protein sequence, read N- to C-terminus: Ribosomal RNA small subunit methyltransferase G (231 aa).

Positions 85, 90, and 154 each coordinate S-adenosyl-L-methionine.

Belongs to the methyltransferase superfamily. RNA methyltransferase RsmG family.

Its subcellular location is the cytoplasm. It catalyses the reaction guanosine(527) in 16S rRNA + S-adenosyl-L-methionine = N(7)-methylguanosine(527) in 16S rRNA + S-adenosyl-L-homocysteine. Its function is as follows. Specifically methylates the N7 position of guanine in position 527 of 16S rRNA. This Rhodopseudomonas palustris (strain BisA53) protein is Ribosomal RNA small subunit methyltransferase G.